A 152-amino-acid chain; its full sequence is Large ribosomal subunit protein uL15 (152 aa).

The interval 1–66 (MLQLHTIKPN…PLHRRLPKKG (66 aa)) is disordered. The span at 24 to 36 (ESSGLGKTCGKGN) shows a compositional bias: gly residues.

Belongs to the universal ribosomal protein uL15 family. In terms of assembly, part of the 50S ribosomal subunit.

Its function is as follows. Binds to the 23S rRNA. This is Large ribosomal subunit protein uL15 from Akkermansia muciniphila (strain ATCC BAA-835 / DSM 22959 / JCM 33894 / BCRC 81048 / CCUG 64013 / CIP 107961 / Muc).